A 2472-amino-acid chain; its full sequence is Telomere-associated protein RIF1 (2472 aa).

Residues 1–25 form a disordered region; that stretch reads MTARGQSPLAPLLETLEDPSASHGG. Residue serine 402 is modified to Phosphoserine. Threonine 409 carries the post-translational modification Phosphothreonine. Residues serine 782, serine 979, and serine 1008 each carry the phosphoserine modification. Threonine 1047 bears the Phosphothreonine mark. Residues 1145–1192 are disordered; that stretch reads LEKSSLSNNECGSLDKTSPEMSNSNNDERKKALISSRKTSTECASSTE. Over residues 1148-1169 the composition is skewed to polar residues; sequence SSLSNNECGSLDKTSPEMSNSN. Serine 1162 is modified (phosphoserine). Phosphothreonine is present on threonine 1220. Phosphoserine occurs at positions 1236 and 1238. Composition is skewed to basic and acidic residues over residues 1265-1279 and 1306-1315; these read AKQREGTFSKSDSEK and MRSEPEKNTE. Disordered regions lie at residues 1265 to 1318, 1398 to 1464, and 1479 to 1587; these read AKQR…EESV, MVNE…DVLP, and IEKG…DQEE. The span at 1400 to 1412 shows a compositional bias: polar residues; it reads NEDSQVQITPNQK. Phosphoserine occurs at positions 1422, 1454, and 1513. Basic and acidic residues-rich tracts occupy residues 1431-1464 and 1500-1530; these read SQDKENSHQKKERRKEEEKPLQKSPLHIKDDVLP and EQNKKKADPENIKSEGDGTQDIVDKSSEKLV. The residue at position 1518 (threonine 1518) is a Phosphothreonine. 5 positions are modified to phosphoserine: serine 1542, serine 1552, serine 1554, serine 1556, and serine 1564. Positions 1565–1574 are enriched in basic residues; that stretch reads RKKRSGKWKN. Phosphoserine is present on residues serine 1576, serine 1579, serine 1613, serine 1616, serine 1688, serine 1693, serine 1706, and serine 1709. Positions 1762–1782 are disordered; sequence TKKADVQAPVSPSETSQANPY. The span at 1771–1782 shows a compositional bias: polar residues; the sequence is VSPSETSQANPY. The residue at position 1806 (threonine 1806) is a Phosphothreonine. Position 1810 is a phosphoserine (serine 1810). Residues 1846–1859 are compositionally biased toward polar residues; it reads AMSLESQESPNENF. The disordered stretch occupies residues 1846-1889; sequence AMSLESQESPNENFKTVGPCLGDSKNVSQESLETKEEKPEETPK. Phosphoserine is present on residues serine 1873 and serine 1876. Basic and acidic residues predominate over residues 1877-1889; it reads LETKEEKPEETPK. An interaction with condensed chromosomes in telophase region spans residues 1924-2472; the sequence is EASFHGQERT…WRSPSHENSI (549 aa). Serine 1926 and serine 1971 each carry phosphoserine. Residues 1992-2021 form a disordered region; it reads EQTAAGELDGGNDVSDLHSSEETNTKMKNN. The segment covering 2006 to 2021 has biased composition (basic and acidic residues); it reads SDLHSSEETNTKMKNN. Serine 2144 and serine 2161 each carry phosphoserine. Phosphothreonine is present on threonine 2167. The interaction with ERCC6 stretch occupies residues 2170–2446; it reads VWSPLASPST…SGSQLFEMHE (277 aa). 5 positions are modified to phosphoserine: serine 2172, serine 2176, serine 2195, serine 2196, and serine 2205. The span at 2227 to 2255 shows a compositional bias: polar residues; that stretch reads RSHSSNSSPIGKSVKTSPTTQSKHNTTSA. The interval 2227–2269 is disordered; that stretch reads RSHSSNSSPIGKSVKTSPTTQSKHNTTSAKGFLSPGSRSPKFK. A phosphoserine mark is found at serine 2260, serine 2339, serine 2391, serine 2393, serine 2465, and serine 2471.

It belongs to the RIF1 family. As to quaternary structure, interacts with TP53BP1 (when phosphorylated by ATM). May interact with TRF2. Interacts with SHLD2. Interacts with ERCC6 (via WHD region). Interacts with ASTE1. As to expression, highly expressed in testis.

It localises to the nucleus. Its subcellular location is the chromosome. The protein resides in the telomere. It is found in the cytoplasm. The protein localises to the cytoskeleton. It localises to the spindle. Its function is as follows. Key regulator of TP53BP1 that plays a key role in the repair of double-strand DNA breaks (DSBs) in response to DNA damage: acts by promoting non-homologous end joining (NHEJ)-mediated repair of DSBs. In response to DNA damage, interacts with ATM-phosphorylated TP53BP1. Interaction with TP53BP1 leads to dissociate the interaction between NUDT16L1/TIRR and TP53BP1, thereby unmasking the tandem Tudor-like domain of TP53BP1 and allowing recruitment to DNA DSBs. Once recruited to DSBs, RIF1 and TP53BP1 act by promoting NHEJ-mediated repair of DSBs. In the same time, RIF1 and TP53BP1 specifically counteract the function of BRCA1 by blocking DSBs resection via homologous recombination (HR) during G1 phase. Also required for immunoglobulin class-switch recombination (CSR) during antibody genesis, a process that involves the generation of DNA DSBs. Promotes NHEJ of dysfunctional telomeres. This Homo sapiens (Human) protein is Telomere-associated protein RIF1.